Reading from the N-terminus, the 466-residue chain is Asparagine--tRNA ligase (466 aa).

This sequence belongs to the class-II aminoacyl-tRNA synthetase family. In terms of assembly, homodimer.

The protein resides in the cytoplasm. The catalysed reaction is tRNA(Asn) + L-asparagine + ATP = L-asparaginyl-tRNA(Asn) + AMP + diphosphate + H(+). This Enterobacter sp. (strain 638) protein is Asparagine--tRNA ligase.